The primary structure comprises 328 residues: Putative GDP-L-fucose synthase 2 (328 aa).

Alanine 2 is modified (N-acetylalanine). 26–32 (GHRGLVG) is an NADP(+) binding site. Tyrosine 152 acts as the Proton donor/acceptor in catalysis. NADP(+) contacts are provided by residues lysine 156, 179–182 (PTNL), and histidine 195. The substrate site is built by arginine 203, tryptophan 218, arginine 225, and aspartate 285.

Belongs to the NAD(P)-dependent epimerase/dehydratase family. Fucose synthase subfamily. In terms of assembly, homodimer.

It carries out the reaction GDP-beta-L-fucose + NADP(+) = GDP-4-dehydro-alpha-D-rhamnose + NADPH + H(+). Its pathway is nucleotide-sugar biosynthesis; GDP-L-fucose biosynthesis via de novo pathway; GDP-L-fucose from GDP-alpha-D-mannose: step 2/2. Its function is as follows. Catalyzes the two-step NADP-dependent conversion of GDP-4-dehydro-6-deoxy-D-mannose to GDP-fucose, involving an epimerase and a reductase reaction. The protein is Putative GDP-L-fucose synthase 2 (GER2) of Arabidopsis thaliana (Mouse-ear cress).